The sequence spans 367 residues: 2-aminoethylphosphonate--pyruvate transaminase (367 aa).

Residue Lys-193 is modified to N6-(pyridoxal phosphate)lysine.

This sequence belongs to the class-V pyridoxal-phosphate-dependent aminotransferase family. PhnW subfamily. As to quaternary structure, homodimer. Requires pyridoxal 5'-phosphate as cofactor.

The enzyme catalyses (2-aminoethyl)phosphonate + pyruvate = phosphonoacetaldehyde + L-alanine. Involved in phosphonate degradation. This is 2-aminoethylphosphonate--pyruvate transaminase from Vibrio vulnificus (strain CMCP6).